We begin with the raw amino-acid sequence, 422 residues long: MSDSKEPRVQPLGLLEEDPTTSGIRLFPRDFQFQQTHGHKSSTGCLGHGPLVLQLLSFALLAGVLVAILVQVYKVPSSLSQEQSEQDVIYQNLTQLKAAVGELSEKSKLQEIYQELTQLKAAVGELPEKSKQQEIYQELTQLKASVGELPEKSQLQEIYQELTRLKAAVGELPEESRLQEIYQELTRLKAAVGELPEKSRLQEIYQELTRLKAAVGELPEKSRLQEIYQELTRLKAAVGELPEKSKLQEIYQELTRLKAAVGELPDQSKQQQIYQELTDLKTAFERLCCRCPKDWTFFQGNCYFMSNSQRNWHDSVTACQEVGAQLVVIKSAEEQNFLQLQTSRSNRFSWMGLSDLNQEGTWQWVDGSPLSSSFQRYWNSGEPNNSGDEDCAEFSGSGWNDNRCNVDNYWICKKPIACFRDE.

The Cytoplasmic portion of the chain corresponds to 1 to 49 (MSDSKEPRVQPLGLLEEDPTTSGIRLFPRDFQFQQTHGHKSSTGCLGHG). The short motif at 14 to 15 (LL) is the Endocytosis signal element. Residues 50–70 (PLVLQLLSFALLAGVLVAILV) form a helical; Signal-anchor for type II membrane protein membrane-spanning segment. Topologically, residues 71–422 (QVYKVPSSLS…KKPIACFRDE (352 aa)) are extracellular. The N-linked (GlcNAc...) asparagine glycan is linked to N92. A run of 8 repeats spans residues 108–130 (KLQE…PEKS), 131–151 (KQQE…ELPE), 154–176 (QLQE…PEES), 177–199 (RLQE…PEKS), 200–222 (RLQE…PEKS), 223–245 (RLQE…PEKS), 246–268 (KLQE…PDQS), and 269–291 (KQQQ…CCRC). Positions 108–292 (KLQEIYQELT…AFERLCCRCP (185 aa)) are 8 X approximate tandem repeats. Disulfide bonds link C288–C418, C291–C302, C319–C412, and C391–C404. The 117-residue stretch at 297–413 (FFQGNCYFMS…CNVDNYWICK (117 aa)) folds into the C-type lectin domain. The Ca(2+) site is built by E382, N384, S386, E389, N400, and D401. A glycan (N-linked (GlcNAc...) asparagine) is linked at N384.

Homotetramer.

It localises to the membrane. Its function is as follows. Probable pathogen-recognition receptor involved in peripheral immune surveillance in liver. May mediate the endocytosis of pathogens which are subsequently degraded in lysosomal compartments. Probably recognizes in a calcium-dependent manner high mannose N-linked oligosaccharides in a variety of pathogen antigens. Is a receptor for ICAM3, probably by binding to mannose-like carbohydrates. This is C-type lectin domain family 4 member M (CLEC4M) from Symphalangus syndactylus (Siamang).